The primary structure comprises 131 residues: Small ribosomal subunit protein uS8 (131 aa).

The protein belongs to the universal ribosomal protein uS8 family. As to quaternary structure, part of the 30S ribosomal subunit. Contacts proteins S5 and S12.

Its function is as follows. One of the primary rRNA binding proteins, it binds directly to 16S rRNA central domain where it helps coordinate assembly of the platform of the 30S subunit. In Chlorobaculum tepidum (strain ATCC 49652 / DSM 12025 / NBRC 103806 / TLS) (Chlorobium tepidum), this protein is Small ribosomal subunit protein uS8.